The following is a 396-amino-acid chain: S-adenosylmethionine synthase (396 aa).

His15 contributes to the ATP binding site. Asp17 provides a ligand contact to Mg(2+). Glu43 contacts K(+). The L-methionine site is built by Glu56 and Gln99. A flexible loop region spans residues Gln99–Arg109. Residues Asp175 to Lys177, Arg241 to Phe242, Asp250, Arg256 to Lys257, Ala273, and Lys277 contribute to the ATP site. Asp250 provides a ligand contact to L-methionine. Lys281 provides a ligand contact to L-methionine.

This sequence belongs to the AdoMet synthase family. As to quaternary structure, homotetramer; dimer of dimers. Mg(2+) is required as a cofactor. K(+) serves as cofactor.

The protein resides in the cytoplasm. It catalyses the reaction L-methionine + ATP + H2O = S-adenosyl-L-methionine + phosphate + diphosphate. It functions in the pathway amino-acid biosynthesis; S-adenosyl-L-methionine biosynthesis; S-adenosyl-L-methionine from L-methionine: step 1/1. In terms of biological role, catalyzes the formation of S-adenosylmethionine (AdoMet) from methionine and ATP. The overall synthetic reaction is composed of two sequential steps, AdoMet formation and the subsequent tripolyphosphate hydrolysis which occurs prior to release of AdoMet from the enzyme. This chain is S-adenosylmethionine synthase, found in Carboxydothermus hydrogenoformans (strain ATCC BAA-161 / DSM 6008 / Z-2901).